Here is a 106-residue protein sequence, read N- to C-terminus: uncharacterized protein (106 aa).

Belongs to the HesB/IscA family.

This is an uncharacterized protein from Rhodobacter capsulatus (Rhodopseudomonas capsulata).